Consider the following 124-residue polypeptide: Putative outer membrane protein TC_0858 (124 aa).

Residues 1–31 (MGKTKKRKQSITLIEMMVVITLIGIISGALA) form the signal peptide.

It is found in the cell outer membrane. This Chlamydia muridarum (strain MoPn / Nigg) protein is Putative outer membrane protein TC_0858.